The sequence spans 298 residues: ADP/ATP translocase 3 (298 aa).

The residue at position 1 (methionine 1) is an N-acetylmethionine. Over 1-7 (MTEQAIS) the chain is Mitochondrial intermembrane. Threonine 2 is modified (N-acetylthreonine; in ADP/ATP translocase 3, N-terminally processed). A Solcar 1 repeat occupies 6–98 (ISFAKDFLAG…FAFKDKYKQI (93 aa)). The chain crosses the membrane as a helical span at residues 8-37 (FAKDFLAGGIAAAISKTAVAPIERVKLLLQ). Over 38-74 (VQHASKQIAADKQYKGIVDCIVRIPKEQGVLSFWRGN) the chain is Mitochondrial matrix. Lysine 52 is modified (N6,N6,N6-trimethyllysine). Residues 75–99 (LANVIRYFPTQALNFAFKDKYKQIF) form a helical membrane-spanning segment. ADP contacts are provided by arginine 80 and lysine 92. Residues 100–109 (LGGVDKHTQF) are Mitochondrial intermembrane-facing. N6-acetyllysine is present on lysine 105. The helical transmembrane segment at 110 to 130 (WRYFAGNLASGGAAGATSLCF) threads the bilayer. Solcar repeat units lie at residues 111–201 (RYFA…AKGM) and 212–297 (VSWM…LKKV). Over 131–178 (VYPLDFARTRLAADVGKSATEREFKGLGDCLVKITKSDGIRGLYQGFN) the chain is Mitochondrial matrix. The helical transmembrane segment at 179–199 (VSVQGIIIYRAAYFGVYGTAK) threads the bilayer. The Mitochondrial intermembrane portion of the chain corresponds to 200–210 (GMLPDPRNTHI). A helical transmembrane segment spans residues 211 to 231 (VVSWMIAQTVTAVAGVFSYPF). Residues 232-273 (DTVRRRMMMQSGRKGADIMYKGTLDCWRKIFKDEGGKAFFKG) are Mitochondrial matrix-facing. Residue arginine 235 participates in ADP binding. The tract at residues 235–240 (RRRMMM) is important for transport activity. The Nucleotide carrier signature motif motif lies at 235–240 (RRRMMM). An N6-acetyllysine modification is found at lysine 268. The chain crosses the membrane as a helical span at residues 274 to 291 (AWSNVLRGMGGAFVLVLY). The Mitochondrial intermembrane segment spans residues 292 to 298 (DELKKVI).

This sequence belongs to the mitochondrial carrier (TC 2.A.29) family. As to quaternary structure, monomer. Found in a complex with ARL2, ARL2BP and SLC25A6/ANT3. Post-translationally, trimethylated by ANTKMT at Lys-52.

Its subcellular location is the mitochondrion inner membrane. The protein resides in the membrane. The enzyme catalyses ADP(in) + ATP(out) = ADP(out) + ATP(in). The catalysed reaction is H(+)(in) = H(+)(out). The matrix-open state (m-state) is inhibited by the membrane-permeable bongkrekic acid (BKA). The cytoplasmic-open state (c-state) is inhibited by the membrane-impermeable toxic inhibitor carboxyatractyloside (CATR). Proton transporter activity is inhibited by ADP:ATP antiporter activity. Functionally, ADP:ATP antiporter that mediates import of ADP into the mitochondrial matrix for ATP synthesis, and export of ATP out to fuel the cell. Cycles between the cytoplasmic-open state (c-state) and the matrix-open state (m-state): operates by the alternating access mechanism with a single substrate-binding site intermittently exposed to either the cytosolic (c-state) or matrix (m-state) side of the inner mitochondrial membrane. In addition to its ADP:ATP antiporter activity, also involved in mitochondrial uncoupling and mitochondrial permeability transition pore (mPTP) activity. Plays a role in mitochondrial uncoupling by acting as a proton transporter: proton transport uncouples the proton flows via the electron transport chain and ATP synthase to reduce the efficiency of ATP production and cause mitochondrial thermogenesis. Proton transporter activity is inhibited by ADP:ATP antiporter activity, suggesting that SLC25A6/ANT3 acts as a master regulator of mitochondrial energy output by maintaining a delicate balance between ATP production (ADP:ATP antiporter activity) and thermogenesis (proton transporter activity). Proton transporter activity requires free fatty acids as cofactor, but does not transport it. Also plays a key role in mPTP opening, a non-specific pore that enables free passage of the mitochondrial membranes to solutes of up to 1.5 kDa, and which contributes to cell death. It is however unclear if SLC25A6/ANT3 constitutes a pore-forming component of mPTP or regulates it. The chain is ADP/ATP translocase 3 from Sus scrofa (Pig).